Here is a 397-residue protein sequence, read N- to C-terminus: Carbamoyl phosphate synthase small chain (397 aa).

The CPSase stretch occupies residues 1-204; it reads MSPLLPSFPF…PAYRTLDTSK (204 aa). Positions 53, 256, and 258 each coordinate L-glutamine. The 188-residue stretch at 208–395 folds into the Glutamine amidotransferase type-1 domain; sequence KVVAYDFGVK…MELMNAAKKE (188 aa). The Nucleophile role is filled by Cys-284. Leu-285, Gln-288, Asn-326, Gly-328, and Phe-329 together coordinate L-glutamine. Active-site residues include His-368 and Glu-370.

This sequence belongs to the CarA family. As to quaternary structure, composed of two chains; the small (or glutamine) chain promotes the hydrolysis of glutamine to ammonia, which is used by the large (or ammonia) chain to synthesize carbamoyl phosphate. Tetramer of heterodimers (alpha,beta)4.

The enzyme catalyses hydrogencarbonate + L-glutamine + 2 ATP + H2O = carbamoyl phosphate + L-glutamate + 2 ADP + phosphate + 2 H(+). The catalysed reaction is L-glutamine + H2O = L-glutamate + NH4(+). It functions in the pathway amino-acid biosynthesis; L-arginine biosynthesis; carbamoyl phosphate from bicarbonate: step 1/1. It participates in pyrimidine metabolism; UMP biosynthesis via de novo pathway; (S)-dihydroorotate from bicarbonate: step 1/3. Small subunit of the glutamine-dependent carbamoyl phosphate synthetase (CPSase). CPSase catalyzes the formation of carbamoyl phosphate from the ammonia moiety of glutamine, carbonate, and phosphate donated by ATP, constituting the first step of 2 biosynthetic pathways, one leading to arginine and/or urea and the other to pyrimidine nucleotides. The small subunit (glutamine amidotransferase) binds and cleaves glutamine to supply the large subunit with the substrate ammonia. The chain is Carbamoyl phosphate synthase small chain from Polynucleobacter asymbioticus (strain DSM 18221 / CIP 109841 / QLW-P1DMWA-1) (Polynucleobacter necessarius subsp. asymbioticus).